Consider the following 229-residue polypeptide: C-type lectin domain family 1 member B (229 aa).

The Cytoplasmic portion of the chain corresponds to 1-33 (MQDEDGYITLNIKTRKPALISVGSASSSWWRVM). At Tyr7 the chain carries Phosphotyrosine. Residues 7-10 (YITL) carry the ITAM motif. A helical; Signal-anchor for type II membrane protein membrane pass occupies residues 34-54 (ALILLILCVGMVVGLVALGIW). At 55-229 (SVMQRNYLQG…AGMTKVDQLP (175 aa)) the chain is on the extracellular side. Asn68 carries an N-linked (GlcNAc...) asparagine glycan. Cys102 and Cys113 are joined by a disulfide. The C-type lectin domain maps to 109 to 217 (YGDSCYGFFR…CENKHYLMCE (109 aa)). N-linked (GlcNAc...) asparagine glycans are attached at residues Asn120 and Asn134. Intrachain disulfides connect Cys130-Cys216 and Cys195-Cys208.

As to quaternary structure, homodimer. Interacts (via cytoplasmic domain) with RACK1; promotes CLEC1B ubiquitination and proteasome-mediated degradation. Interacts (dimer) with SYK (via SH2 domains). Interacts with PDPN; the interaction is independent of CLEC1B glycosylation and activates CLEC1B. Post-translationally, glycosylated. In terms of processing, phosphorylated on tyrosine residue in response to rhodocytin binding. As to expression, expressed preferentially in the liver. Also expressed in immune cells of myeloid origin and on the surface of platelets.

The protein resides in the membrane. C-type lectin-like receptor that functions as a platelet receptor for the lymphatic endothelial marker, PDPN. After ligand activation, signals via sequential activation of SRC and SYK tyrosine kinases leading to activation of PLCG2. In terms of biological role, (Microbial infection) Acts as a receptor for the platelet-aggregating snake venom protein rhodocytin. Rhodocytin binding leads to tyrosine phosphorylation and this promotes the binding of spleen tyrosine kinase (SYK) and initiation of downstream tyrosine phosphorylation events and activation of PLCG2. Functionally, (Microbial infection) Acts as an attachment factor for Human immunodeficiency virus type 1 (HIV-1) and facilitates its capture by platelets. This chain is C-type lectin domain family 1 member B (CLEC1B), found in Homo sapiens (Human).